Consider the following 1013-residue polypeptide: MGEVAATVEPLAAVKSKSMRSRKRRQRRRRQIAYLAICGLSVAIFGFALATLIRPTTAQADADPGSWRKGYVGHGTTHEQLGQPHWPPVQYTVYRPTTNYTKAPPPPTSAMNPIFNFTHFLYDKVLYRDEPIPEGYIVVKNSDTLSLGPKVEENDWRDLLAHYWMVLIWVVILVVLIIVIPFIAVCYCCFCCCRRCRQGCPPCTSKQDAQRRFCCGICLLILIIGLIFGIIIAFVTNKMIDSGFAETSETMKRGSEDTCTYLKDVADHVHHLMMYNYEEMETHVLDQLTHAHRHIFLDLSDTSESNSLAEMERVLENMPEALELMRQVEKMEKDLRFYGSQLRDGVRGIKRDVNFAVANLCQLQMCQKFLISSNIEHIDSSQCLHFDNLPNTKEFVEGMENIVASEYYAIPQRGLSRLKKVSDKVKTQLSFVVPPMMRDLTKGRTIFREHATNVRNIVEGVLSDIHIKTLHSTKSFEDVYERFGHDRNVVSLIVCLLILLVLFILIFALLCGCFGRRRTGYGDECCSKSTGATCLLLAILLIFCVFSFIALVGLFYFMLGMVTYQGACAPLRDQENNTLFRQLDASIDLNHYLPPSESNKEVVQPLKMSSAIKACHANQTIFDMMRQHNIYDINDLTRIKVMSHSQENTDSIKVFDEDLSTVVLLTKEERDELKTAGESKLAKYHSSLYMPSLCTQFTPMNLNALSEQLYKLSNDLEYPAYGWAKVSFWNEGLNTKAFYRNFVPKLTSLVEKMKANLKKIDELISYENHDFTNTIKILTATAINSEQFIQTRGKDYINALGGNLTNSIDQMIDDYIDMIIKEANESVGHCAPLSYIYYRGVDLICHRIVDPINGFWVGILLCALLFLPILFVAHRLMCLYKKIYPYLATVGAAGVVEGGSDYLYDAYSERDREHVPLANVPKKRRKAYERRREQQDYFEDASPSVSRGNRSGGDRGGGGGDGAPGSSSMRYNDMAPTHWDHEPPRYHNPPAAPPSSEYERPPPYYYPGASEQD.

The chain crosses the membrane as a helical span at residues 32–52; it reads IAYLAICGLSVAIFGFALATL. 2 N-linked (GlcNAc...) asparagine glycosylation sites follow: N99 and N116. 3 helical membrane-spanning segments follow: residues 215–235, 489–509, and 535–555; these read CGICLLILIIGLIFGIIIAFV, VVSLIVCLLILLVLFILIFAL, and LLLAILLIFCVFSFIALVGLF. 4 N-linked (GlcNAc...) asparagine glycosylation sites follow: N576, N618, N803, and N824. Residues 852–872 form a helical membrane-spanning segment; that stretch reads INGFWVGILLCALLFLPILFV. Positions 918-1013 are disordered; that stretch reads ANVPKKRRKA…YYYPGASEQD (96 aa). An N-linked (GlcNAc...) asparagine glycan is attached at N949. The segment covering 950–963 has biased composition (gly residues); it reads RSGGDRGGGGGDGA.

This sequence belongs to the prominin family.

Its subcellular location is the membrane. The chain is Prominin-like protein from Drosophila melanogaster (Fruit fly).